Here is a 121-residue protein sequence, read N- to C-terminus: Large ribosomal subunit protein uL18 (121 aa).

The protein belongs to the universal ribosomal protein uL18 family. Part of the 50S ribosomal subunit; part of the 5S rRNA/L5/L18/L25 subcomplex. Contacts the 5S and 23S rRNAs.

In terms of biological role, this is one of the proteins that bind and probably mediate the attachment of the 5S RNA into the large ribosomal subunit, where it forms part of the central protuberance. The sequence is that of Large ribosomal subunit protein uL18 from Streptococcus equi subsp. zooepidemicus (strain MGCS10565).